The sequence spans 295 residues: Shikimate dehydrogenase (NADP(+)) (295 aa).

Shikimate-binding positions include 18–20 (SRS) and T66. K70 acts as the Proton acceptor in catalysis. Shikimate is bound by residues N91 and D106. NADP(+) contacts are provided by residues 130–134 (GNGGA) and M235. Residue Y237 coordinates shikimate. NADP(+) is bound at residue G258.

Belongs to the shikimate dehydrogenase family. As to quaternary structure, homodimer.

The enzyme catalyses shikimate + NADP(+) = 3-dehydroshikimate + NADPH + H(+). Its pathway is metabolic intermediate biosynthesis; chorismate biosynthesis; chorismate from D-erythrose 4-phosphate and phosphoenolpyruvate: step 4/7. In terms of biological role, involved in the biosynthesis of the chorismate, which leads to the biosynthesis of aromatic amino acids. Catalyzes the reversible NADPH linked reduction of 3-dehydroshikimate (DHSA) to yield shikimate (SA). The sequence is that of Shikimate dehydrogenase (NADP(+)) from Chlorobium phaeobacteroides (strain DSM 266 / SMG 266 / 2430).